The chain runs to 596 residues: uncharacterized protein (596 aa).

The helical transmembrane segment at 7–26 (FWPILLGFTVLVAAGLYYVV) threads the bilayer.

It localises to the membrane. This is an uncharacterized protein from Sinorhizobium fredii (strain NBRC 101917 / NGR234).